We begin with the raw amino-acid sequence, 381 residues long: Stearoyl-[acyl-carrier-protein] 9-desaturase 1, chloroplastic (381 aa).

Residues 1 to 26 (MQVVGTVRVSGCGAVVAPSRRQCRVS) constitute a chloroplast transit peptide. E120, E158, H161, E211, E244, and H247 together coordinate Fe cation.

It belongs to the fatty acid desaturase type 2 family. Homodimer. Requires Fe(2+) as cofactor.

It localises to the plastid. The protein localises to the chloroplast. The catalysed reaction is octadecanoyl-[ACP] + 2 reduced [2Fe-2S]-[ferredoxin] + O2 + 2 H(+) = (9Z)-octadecenoyl-[ACP] + 2 oxidized [2Fe-2S]-[ferredoxin] + 2 H2O. It functions in the pathway lipid metabolism; fatty acid metabolism. Converts stearoyl-ACP to oleoyl-ACP by introduction of a cis double bond between carbons 9 and 10 of the acyl chain. The chain is Stearoyl-[acyl-carrier-protein] 9-desaturase 1, chloroplastic from Oryza sativa subsp. indica (Rice).